The following is a 217-amino-acid chain: Claudin-9 (217 aa).

Residues 1–7 (MASTGLE) are Cytoplasmic-facing. A helical transmembrane segment spans residues 8–28 (LLGMTLAVLGWLGTLVSCALP). The Extracellular segment spans residues 29–81 (LWKVTAFIGNSIVVAQVVWEGLWMSCVVQSTGQMQCKVYDSLLALPQDLQAAR). The chain crosses the membrane as a helical span at residues 82–102 (ALCVIALLLALLGLLVAITGA). The Cytoplasmic portion of the chain corresponds to 103-116 (QCTTCVEDEGAKAR). A helical transmembrane segment spans residues 117 to 137 (IVLTAGVILLLAGILVLIPVC). Residues 138 to 159 (WTAHAIIQDFYNPLVAEALKRE) are Extracellular-facing. The helical transmembrane segment at 160 to 180 (LGASLYLGWAAAALLMLGGGL) threads the bilayer. Residues 181-217 (LCCTCPPPQVERPRGPRLGYSIPSRSGASGLDKRDYV) lie on the Cytoplasmic side of the membrane. Residues 194 to 217 (RGPRLGYSIPSRSGASGLDKRDYV) are disordered.

The protein belongs to the claudin family. Interacts with CLDN1, CD81 and OCLN. Expressed in the liver, in peripheral blood mononuclear cells and hepatocarcinoma cell lines.

The protein localises to the cell junction. It localises to the tight junction. Its subcellular location is the cell membrane. In terms of biological role, plays a major role in tight junction-specific obliteration of the intercellular space, through calcium-independent cell-adhesion activity. (Microbial infection) Acts as a receptor for hepatitis C virus (HCV) entry into hepatic cells. In Homo sapiens (Human), this protein is Claudin-9 (CLDN9).